The primary structure comprises 574 residues: Iron hydrogenase 1 (574 aa).

The 78-residue stretch at 1–78 folds into the 2Fe-2S ferredoxin-type domain; sequence MKTIIINGVQ…GMIINTNSDA (78 aa). Cys34, Cys46, Cys49, and Cys62 together coordinate [2Fe-2S] cluster. A 4Fe-4S His(Cys)3-ligated-type domain is found at 78–117; it reads AVNEKIKSRISQLLDIHEFKCGPCNRRENCEFLKLVIKYK. [4Fe-4S] cluster is bound by residues His94, Cys98, Cys101, Cys107, Cys147, Cys150, Cys153, Cys157, Cys190, Cys193, Cys196, Cys200, Cys300, Cys355, Cys499, and Cys503. 2 4Fe-4S ferredoxin-type domains span residues 138–167 and 181–210; these read KSLT…YAMK and DEKC…EKSH. Cys503 is a binding site for Fe(2+).

As to quaternary structure, monomer. The cofactor is [2Fe-2S] cluster. [4Fe-4S] cluster is required as a cofactor. It depends on Fe(2+) as a cofactor.

It carries out the reaction H2 + 2 oxidized [2Fe-2S]-[ferredoxin] = 2 reduced [2Fe-2S]-[ferredoxin] + 2 H(+). This is Iron hydrogenase 1 from Clostridium pasteurianum.